The chain runs to 313 residues: Ribosomal protein L11 methyltransferase (313 aa).

Threonine 163, glycine 184, aspartate 206, and asparagine 249 together coordinate S-adenosyl-L-methionine.

This sequence belongs to the methyltransferase superfamily. PrmA family.

The protein localises to the cytoplasm. It carries out the reaction L-lysyl-[protein] + 3 S-adenosyl-L-methionine = N(6),N(6),N(6)-trimethyl-L-lysyl-[protein] + 3 S-adenosyl-L-homocysteine + 3 H(+). In terms of biological role, methylates ribosomal protein L11. This chain is Ribosomal protein L11 methyltransferase, found in Brevibacillus brevis (strain 47 / JCM 6285 / NBRC 100599).